A 156-amino-acid chain; its full sequence is Single-stranded DNA-binding protein 1 (156 aa).

The region spanning 1–107 (MNETMICAVG…IDAVAIGHDL (107 aa)) is the SSB domain. The segment covering 114–124 (FRRTARTEAST) has biased composition (low complexity). Positions 114–156 (FRRTARTEASTSPPRPEPNWEVPAGGTPGEPVPEQRPDPVPVG) are disordered.

Homotetramer.

The chain is Single-stranded DNA-binding protein 1 (ssb1) from Streptomyces coelicolor (strain ATCC BAA-471 / A3(2) / M145).